The sequence spans 268 residues: Glutamate racemase (268 aa).

Residues 10-11 (DS) and 42-43 (YG) each bind substrate. Residue C73 is the Proton donor/acceptor of the active site. 74-75 (NT) serves as a coordination point for substrate. The Proton donor/acceptor role is filled by C184. Residue 185–186 (TH) participates in substrate binding.

It belongs to the aspartate/glutamate racemases family.

It catalyses the reaction L-glutamate = D-glutamate. Its pathway is cell wall biogenesis; peptidoglycan biosynthesis. Its function is as follows. Provides the (R)-glutamate required for cell wall biosynthesis. The protein is Glutamate racemase of Limosilactobacillus fermentum (strain NBRC 3956 / LMG 18251) (Lactobacillus fermentum).